The sequence spans 250 residues: DNA repair protein RecO (250 aa).

This sequence belongs to the RecO family.

In terms of biological role, involved in DNA repair and RecF pathway recombination. The protein is DNA repair protein RecO of Syntrophomonas wolfei subsp. wolfei (strain DSM 2245B / Goettingen).